Here is a 216-residue protein sequence, read N- to C-terminus: Ras-related protein Rab-5C (216 aa).

The GTP site is built by S30, A31, G33, K34, S35, S36, H47, E48, T53, and G79. S35 contributes to the Mg(2+) binding site. 2 short sequence motifs (switch) span residues 45–57 (QFHE…IGAA) and 78–94 (AGQE…YRGA). Residue T53 coordinates Mg(2+). S85 carries the post-translational modification Phosphoserine. GTP contacts are provided by N134, K135, D137, A165, and K166. Residues 185–216 (NEPQNAAGAPSRNRGVDLQENSPASRSQCCSN) form a disordered region. Over residues 203-216 (QENSPASRSQCCSN) the composition is skewed to polar residues. Residues C213 and C214 are each lipidated (S-geranylgeranyl cysteine).

The protein belongs to the small GTPase superfamily. Rab family. Interacts with EEA1 and INCA1. Interacts with GDI1, GDI2, CHML and CHM; phosphorylation at Ser-85 disrupts this interaction. The cofactor is Mg(2+). Phosphorylation of Ser-85 in the switch II region by LRRK2 prevents the association of RAB regulatory proteins, including CHM, CHML and RAB GDP dissociation inhibitors GDI1 and GDI2.

The protein resides in the cell membrane. Its subcellular location is the early endosome membrane. The protein localises to the melanosome. The catalysed reaction is GTP + H2O = GDP + phosphate + H(+). With respect to regulation, regulated by guanine nucleotide exchange factors (GEFs) which promote the exchange of bound GDP for free GTP. Regulated by GTPase activating proteins (GAPs) which increase the GTP hydrolysis activity. Inhibited by GDP dissociation inhibitors (GDIs). In terms of biological role, the small GTPases Rab are key regulators of intracellular membrane trafficking, from the formation of transport vesicles to their fusion with membranes. Rabs cycle between an inactive GDP-bound form and an active GTP-bound form that is able to recruit to membranes different sets of downstream effectors directly responsible for vesicle formation, movement, tethering and fusion. The protein is Ras-related protein Rab-5C (RAB5C) of Canis lupus familiaris (Dog).